Here is a 63-residue protein sequence, read N- to C-terminus: Large ribosomal subunit protein uL29 (63 aa).

It belongs to the universal ribosomal protein uL29 family.

The polypeptide is Large ribosomal subunit protein uL29 (Yersinia enterocolitica serotype O:8 / biotype 1B (strain NCTC 13174 / 8081)).